The primary structure comprises 67 residues: Large ribosomal subunit protein bL35 (67 aa).

The protein belongs to the bacterial ribosomal protein bL35 family.

The chain is Large ribosomal subunit protein bL35 from Rhizobium etli (strain CIAT 652).